Consider the following 208-residue polypeptide: 7-carboxy-7-deazaguanine synthase (208 aa).

Residues 23-25 (LQG) and Arg38 each bind substrate. The region spanning 29 to 208 (WAGGNAFFIR…LQTHKYLGVR (180 aa)) is the Radical SAM core domain. [4Fe-4S] cluster is bound by residues Cys42, Cys46, and Cys49. A substrate-binding site is contributed by Thr83. Residues Gly85 and 126-128 (SPK) contribute to the S-adenosyl-L-methionine site.

This sequence belongs to the radical SAM superfamily. 7-carboxy-7-deazaguanine synthase family. In terms of assembly, homodimer. Requires [4Fe-4S] cluster as cofactor. S-adenosyl-L-methionine serves as cofactor. It depends on Mg(2+) as a cofactor.

The enzyme catalyses 6-carboxy-5,6,7,8-tetrahydropterin + H(+) = 7-carboxy-7-deazaguanine + NH4(+). It participates in purine metabolism; 7-cyano-7-deazaguanine biosynthesis. In terms of biological role, catalyzes the complex heterocyclic radical-mediated conversion of 6-carboxy-5,6,7,8-tetrahydropterin (CPH4) to 7-carboxy-7-deazaguanine (CDG), a step common to the biosynthetic pathways of all 7-deazapurine-containing compounds. This chain is 7-carboxy-7-deazaguanine synthase, found in Synechocystis sp. (strain ATCC 27184 / PCC 6803 / Kazusa).